Reading from the N-terminus, the 159-residue chain is Large ribosomal subunit protein uL22 (159 aa).

It belongs to the universal ribosomal protein uL22 family. In terms of assembly, part of the 50S ribosomal subunit.

In terms of biological role, this protein binds specifically to 23S rRNA. It makes multiple contacts with different domains of the 23S rRNA in the assembled 50S subunit and ribosome. Functionally, the globular domain of the protein is located near the polypeptide exit tunnel on the outside of the subunit, while an extended beta-hairpin is found that lines the wall of the exit tunnel in the center of the 70S ribosome. This is Large ribosomal subunit protein uL22 from Ignicoccus hospitalis (strain KIN4/I / DSM 18386 / JCM 14125).